A 144-amino-acid polypeptide reads, in one-letter code: NADH dehydrogenase [ubiquinone] 1 alpha subcomplex subunit 13 (144 aa).

A helical membrane pass occupies residues 30 to 51; sequence LSGYSMLAIGIGTLIYGHWSIM.

This sequence belongs to the complex I NDUFA13 subunit family. In terms of assembly, complex I is composed of 45 different subunits. Interacts with CARD15, but not with CARD4. Interacts with STAT3, but not with STAT1, STAT2 and STAT5A. Interacts with OLFM4.

The protein localises to the mitochondrion inner membrane. Its subcellular location is the nucleus. Functionally, accessory subunit of the mitochondrial membrane respiratory chain NADH dehydrogenase (Complex I), that is believed not to be involved in catalysis. Complex I functions in the transfer of electrons from NADH to the respiratory chain. The immediate electron acceptor for the enzyme is believed to be ubiquinone. Involved in the interferon/all-trans-retinoic acid (IFN/RA) induced cell death. This apoptotic activity is inhibited by interaction with viral IRF1. Prevents the transactivation of STAT3 target genes. May play a role in CARD15-mediated innate mucosal responses and serve to regulate intestinal epithelial cell responses to microbes. The sequence is that of NADH dehydrogenase [ubiquinone] 1 alpha subcomplex subunit 13 (NDUFA13) from Gorilla gorilla gorilla (Western lowland gorilla).